The chain runs to 111 residues: Ig kappa chain V-III region MOPC 70 (111 aa).

The interval 1–23 (DIVLTQSPASLAVSLGQRATISC) is framework-1. A disulfide bridge links cysteine 23 with cysteine 92. The interval 24–38 (RASESVDNSGISFMN) is complementarity-determining-1. The framework-2 stretch occupies residues 39–53 (WFQQKPGQPPKLLIY). The complementarity-determining-2 stretch occupies residues 54 to 60 (AASNQGS). Positions 61–92 (GVPARFSGSGSGTDFSLNIHPMEEDDTAMYFC) are framework-3. The complementarity-determining-3 stretch occupies residues 93-101 (QQSKEVPWT). A framework-4 region spans residues 102-111 (FGGGTKLEIK).

The chain is Ig kappa chain V-III region MOPC 70 from Mus musculus (Mouse).